We begin with the raw amino-acid sequence, 198 residues long: UPF0098 protein PH1269 (198 aa).

This sequence belongs to the UPF0098 family.

The sequence is that of UPF0098 protein PH1269 from Pyrococcus horikoshii (strain ATCC 700860 / DSM 12428 / JCM 9974 / NBRC 100139 / OT-3).